The following is a 224-amino-acid chain: MESGAYGAANAGGSFDLRRFLSQPQVVTRLVSMVLALIVFSCIFGEGYTNIHTSDQLYCVFNQNEDACRYGSAIGVLAFLASAFFLVVDAFFSQISNATDRKYLVIGDLLFSALWTFLWFVGFCFLTNQWAATKPQDVRVGADSARAAITFSFFSIFSWGVLASLAYQRYKAGVDAFIQNYVDPTPDPNTAYASYPSASVENYQQPPFTQNVETTEGYQPPPVY.

The residue at position 1 (Met1) is an N-acetylmethionine. Ser3 is modified (phosphoserine). The region spanning 20-171 (FLSQPQVVTR…LASLAYQRYK (152 aa)) is the MARVEL domain. 4 helical membrane passes run 31-51 (VSMV…YTNI), 72-92 (SAIG…DAFF), 105-125 (VIGD…GFCF), and 147-167 (AAIT…SLAY).

The protein belongs to the synaptogyrin family. Post-translationally, may be tyrosine phosphorylated by Src.

Its subcellular location is the cytoplasmic vesicle membrane. It is found in the cytoplasmic vesicle. The protein localises to the secretory vesicle. The protein resides in the synaptic vesicle membrane. In terms of biological role, may play a role in regulated exocytosis. In neuronal cells, modulates the localization of synaptophysin/SYP into synaptic-like microvesicles and may therefore play a role in the formation and/or the maturation of this vesicles. May also play a role in GLUT4 storage and transport to the plasma membrane. This chain is Synaptogyrin-2, found in Mus musculus (Mouse).